A 296-amino-acid polypeptide reads, in one-letter code: Acetaldehyde dehydrogenase (296 aa).

Residue 15–18 (SGNI) coordinates NAD(+). Cys-132 acts as the Acyl-thioester intermediate in catalysis. Residues 164–172 (SAGPATRAN) and Asn-274 each bind NAD(+).

The protein belongs to the acetaldehyde dehydrogenase family. In terms of assembly, interacts with MhpE.

It carries out the reaction acetaldehyde + NAD(+) + CoA = acetyl-CoA + NADH + H(+). It functions in the pathway aromatic compound metabolism; 3-phenylpropanoate degradation. Functionally, catalyzes the conversion of acetaldehyde to acetyl-CoA, using NAD(+) and coenzyme A. Is the final enzyme in the meta-cleavage pathway for the degradation of aromatic compounds. This is Acetaldehyde dehydrogenase from Pectobacterium atrosepticum (strain SCRI 1043 / ATCC BAA-672) (Erwinia carotovora subsp. atroseptica).